A 316-amino-acid polypeptide reads, in one-letter code: Probable cell division protein WhiA (316 aa).

The H-T-H motif DNA-binding region spans 280 to 313; the sequence is SLKELGEMLEPPVGKSGVNHRLRKIEKIAEELRT.

It belongs to the WhiA family.

Its function is as follows. Involved in cell division and chromosome segregation. The protein is Probable cell division protein WhiA of Clostridium perfringens (strain 13 / Type A).